The primary structure comprises 513 residues: Glucose-6-phosphate 1-dehydrogenase 2 (513 aa).

An N-acetylalanine modification is found at Ala-2. Position 8 is a phosphoserine (Ser-8). The residue at position 10 (Thr-10) is a Phosphothreonine. NADP(+)-binding positions include 38–45 (GASGDLAK) and Arg-72. Lys-89 carries the post-translational modification N6-acetyllysine. NADP(+)-binding residues include Tyr-147 and Lys-171. D-glucose 6-phosphate is bound by residues Lys-171, 201-205 (HYLDK), Glu-239, and Asp-258. Lys-171 is modified (N6-(2-hydroxyisobutyryl)lysine; alternate). At Lys-171 the chain carries N6-acetyllysine; alternate. Residue His-263 is the Proton acceptor of the active site. Arg-357 lines the NADP(+) pocket. Residues Lys-360 and Arg-365 each coordinate D-glucose 6-phosphate. 3 residues coordinate NADP(+): Lys-366, Arg-370, and Arg-393. Gln-395 contacts D-glucose 6-phosphate. 421–423 (DLT) lines the NADP(+) pocket. At Lys-432 the chain carries N6-acetyllysine. NADP(+) contacts are provided by Arg-487 and Tyr-503. Position 503 is a phosphotyrosine (Tyr-503).

This sequence belongs to the glucose-6-phosphate dehydrogenase family. In terms of assembly, homotetramer; dimer of dimers. Interacts with SIRT2; the interaction is enhanced by H(2)O(2) treatment. Acetylated by ELP3; acetylation inhibits its homodimerization and enzyme activity. Deacetylated by SIRT2; deacetylation stimulates its enzyme activity. Testis.

Its subcellular location is the cytoplasm. It localises to the cytosol. It is found in the membrane. The enzyme catalyses D-glucose 6-phosphate + NADP(+) = 6-phospho-D-glucono-1,5-lactone + NADPH + H(+). Its pathway is carbohydrate degradation; pentose phosphate pathway; D-ribulose 5-phosphate from D-glucose 6-phosphate (oxidative stage): step 1/3. Its function is as follows. Catalyzes the rate-limiting step of the oxidative pentose-phosphate pathway, which represents a route for the dissimilation of carbohydrates besides glycolysis. The main function of this enzyme is to provide reducing power (NADPH) and pentose phosphates for fatty acid and nucleic acid synthesis. The sequence is that of Glucose-6-phosphate 1-dehydrogenase 2 (G6pd2) from Mus musculus (Mouse).